Consider the following 108-residue polypeptide: Thiosulfate sulfurtransferase GlpE (108 aa).

The Rhodanese domain maps to 17–105 (VSQSAILVDV…WLREFPQAIT (89 aa)). Cys-65 acts as the Cysteine persulfide intermediate in catalysis.

Belongs to the GlpE family.

Its subcellular location is the cytoplasm. It catalyses the reaction thiosulfate + hydrogen cyanide = thiocyanate + sulfite + 2 H(+). The catalysed reaction is thiosulfate + [thioredoxin]-dithiol = [thioredoxin]-disulfide + hydrogen sulfide + sulfite + 2 H(+). Its function is as follows. Transferase that catalyzes the transfer of sulfur from thiosulfate to thiophilic acceptors such as cyanide or dithiols. May function in a CysM-independent thiosulfate assimilation pathway by catalyzing the conversion of thiosulfate to sulfite, which can then be used for L-cysteine biosynthesis. This Proteus mirabilis (strain HI4320) protein is Thiosulfate sulfurtransferase GlpE.